Here is a 135-residue protein sequence, read N- to C-terminus: Large ribosomal subunit protein uL16c (135 aa).

The protein belongs to the universal ribosomal protein uL16 family. Part of the 50S ribosomal subunit.

It localises to the plastid. The protein resides in the chloroplast. This chain is Large ribosomal subunit protein uL16c, found in Piper cenocladum (Ant piper).